The sequence spans 62 residues: Endoregulin (62 aa).

A helical transmembrane segment spans residues 25 to 45 (LAVIILFITAVLLLILFAIVF).

Homooligomer. Can also form heterooligomers with other sarcoplasmic/endoplasmic reticulum calcium ATPase (SERCA) regulators ARLN, PLN, SLN and STRIT1/DWORF. Monomer. Interacts as a monomer with ATP2A2/SERCA2; the interaction results in inhibition of ATP2A2 Ca(2+) affinity.

Its subcellular location is the endoplasmic reticulum membrane. Inhibits the activity of the calcium ATPases ATP2A2/SERCA2 and ATP2A3/SERCA3 by decreasing their apparent affinity for Ca(2+). This chain is Endoregulin, found in Homo sapiens (Human).